Consider the following 336-residue polypeptide: uncharacterized protein (336 aa).

An N-terminal signal peptide occupies residues 1–23 (MKTRHLVYLAFALLGLGLAGLLE). 3 helical membrane passes run 34–54 (LLSL…LLLG), 75–95 (VVVA…LLTT), and 106–126 (VHSL…ALGY). The region spanning 144-255 (VLDTSVLVDG…MARIYGVKAL (112 aa)) is the PINc domain. Asp-222 provides a ligand contact to Mg(2+). The 62-residue stretch at 267 to 328 (QLQVGDTLKL…IQTQVGRLFF (62 aa)) folds into the TRAM domain.

This sequence belongs to the PINc/VapC protein family. The cofactor is Mg(2+).

Its subcellular location is the membrane. Its function is as follows. Part of a toxin-antitoxin (TA) system. An RNase. This is an uncharacterized protein from Thermus thermophilus (strain ATCC 27634 / DSM 579 / HB8).